The chain runs to 164 residues: Cyanate hydratase (164 aa).

Active-site residues include Arg90, Glu93, and Ser116.

This sequence belongs to the cyanase family.

The enzyme catalyses cyanate + hydrogencarbonate + 3 H(+) = NH4(+) + 2 CO2. Its function is as follows. Catalyzes the reaction of cyanate with bicarbonate to produce ammonia and carbon dioxide. The sequence is that of Cyanate hydratase from Ricinus communis (Castor bean).